A 371-amino-acid chain; its full sequence is N-acetyldiaminopimelate deacetylase (371 aa).

The active site involves D68. E127 (proton acceptor) is an active-site residue.

The protein belongs to the peptidase M20A family. N-acetyldiaminopimelate deacetylase subfamily.

The catalysed reaction is N-acetyl-(2S,6S)-2,6-diaminopimelate + H2O = (2S,6S)-2,6-diaminopimelate + acetate. The protein operates within amino-acid biosynthesis; L-lysine biosynthesis via DAP pathway; LL-2,6-diaminopimelate from (S)-tetrahydrodipicolinate (acetylase route): step 3/3. Catalyzes the conversion of N-acetyl-diaminopimelate to diaminopimelate and acetate. This chain is N-acetyldiaminopimelate deacetylase, found in Halalkalibacterium halodurans (strain ATCC BAA-125 / DSM 18197 / FERM 7344 / JCM 9153 / C-125) (Bacillus halodurans).